Here is a 427-residue protein sequence, read N- to C-terminus: MVSVPLRWYNIAADLPEPLPPLRDPEGLREESRIALLSRILPSRLIEDEYILARWVDIPGEVRKALARIGRPTPLIRAEGLEKVLGVKGRVRIYYKSEAVLPTGSHKINTAIAQAYYAKLDGAKEIVTETGAGQWGLAASTAAALMGLKATVFMTASSFKSKIQRRLLMEAQGARVISSPSKLTDTGREALEEYGSTHPGSLGLAIAEAVEYTLESGDRRYLPGSVLEAVLMHQTVIGLEALDQLPEEPDVVVACVGGGSNFGGFTYPMIGARLRGEGFEKTRFIAAESTAAPKLTRGEYRYDGLDSSLILPLAKMYTLGHRYTPPPSHAAGLRYHGVSPSLSILRRLGLVEAEAIPQEEALASILLMARSEGVVPAPESSHAVALAARIARKLPDGSVVAFNLSGHGLLDLDALQKALEIRGASMW.

An N6-(pyridoxal phosphate)lysine modification is found at Lys-107.

Belongs to the TrpB family. As to quaternary structure, tetramer of two alpha and two beta chains. It depends on pyridoxal 5'-phosphate as a cofactor.

It carries out the reaction (1S,2R)-1-C-(indol-3-yl)glycerol 3-phosphate + L-serine = D-glyceraldehyde 3-phosphate + L-tryptophan + H2O. Its pathway is amino-acid biosynthesis; L-tryptophan biosynthesis; L-tryptophan from chorismate: step 5/5. In terms of biological role, the beta subunit is responsible for the synthesis of L-tryptophan from indole and L-serine. The polypeptide is Tryptophan synthase beta chain 1 (trpB1) (Aeropyrum pernix (strain ATCC 700893 / DSM 11879 / JCM 9820 / NBRC 100138 / K1)).